The primary structure comprises 123 residues: Protein HesB, heterocyst (123 aa).

The protein belongs to the HesB/IscA family.

Its function is as follows. May be required for efficient nitrogen fixation. The sequence is that of Protein HesB, heterocyst (hesB1) from Trichormus variabilis (strain ATCC 29413 / PCC 7937) (Anabaena variabilis).